Reading from the N-terminus, the 519-residue chain is B3 domain-containing protein Os03g0620400 (519 aa).

Residues 26–119 (MKCFHLQMSA…RFEVLILDSD (94 aa)) constitute a DNA-binding region (TF-B3 1). Residues 138–218 (ERNAAPVDIS…DPQMPPGRNY (81 aa)) are disordered. The span at 189 to 209 (SGEEGTDSSTSEDESSYELDD) shows a compositional bias: acidic residues. DNA-binding regions (TF-B3) lie at residues 249–349 (VAIM…LRET) and 416–516 (YVSI…IRRN).

The protein resides in the nucleus. The protein is B3 domain-containing protein Os03g0620400 of Oryza sativa subsp. japonica (Rice).